The following is a 597-amino-acid chain: Arginine--tRNA ligase (597 aa).

The 'HIGH' region signature appears at 125 to 135 (PNTNKPLHLGH).

The protein belongs to the class-I aminoacyl-tRNA synthetase family. As to quaternary structure, monomer.

It localises to the cytoplasm. It carries out the reaction tRNA(Arg) + L-arginine + ATP = L-arginyl-tRNA(Arg) + AMP + diphosphate. This Bacteroides thetaiotaomicron (strain ATCC 29148 / DSM 2079 / JCM 5827 / CCUG 10774 / NCTC 10582 / VPI-5482 / E50) protein is Arginine--tRNA ligase.